Here is a 462-residue protein sequence, read N- to C-terminus: Argininosuccinate lyase (462 aa).

This sequence belongs to the lyase 1 family. Argininosuccinate lyase subfamily.

It is found in the cytoplasm. The enzyme catalyses 2-(N(omega)-L-arginino)succinate = fumarate + L-arginine. Its pathway is amino-acid biosynthesis; L-arginine biosynthesis; L-arginine from L-ornithine and carbamoyl phosphate: step 3/3. In Streptococcus agalactiae serotype III (strain NEM316), this protein is Argininosuccinate lyase.